A 485-amino-acid polypeptide reads, in one-letter code: Cysteine--tRNA ligase (485 aa).

Residue cysteine 27 participates in Zn(2+) binding. The 'HIGH' region motif lies at 29 to 39; the sequence is ITAYDFSHIGH. Residues cysteine 208, histidine 233, and glutamate 237 each coordinate Zn(2+). The 'KMSKS' region motif lies at 265 to 269; that stretch reads KMSKS. Lysine 268 serves as a coordination point for ATP.

It belongs to the class-I aminoacyl-tRNA synthetase family. As to quaternary structure, monomer. It depends on Zn(2+) as a cofactor.

The protein localises to the cytoplasm. The catalysed reaction is tRNA(Cys) + L-cysteine + ATP = L-cysteinyl-tRNA(Cys) + AMP + diphosphate. This is Cysteine--tRNA ligase from Lawsonia intracellularis (strain PHE/MN1-00).